The sequence spans 428 residues: Kynureninase (428 aa).

Pyridoxal 5'-phosphate is bound by residues Thr-104, Thr-105, 132-135 (FPSD), Asp-213, His-216, and Tyr-238. Position 239 is an N6-(pyridoxal phosphate)lysine (Lys-239). Positions 267 and 295 each coordinate pyridoxal 5'-phosphate.

This sequence belongs to the kynureninase family. As to quaternary structure, homodimer. The cofactor is pyridoxal 5'-phosphate.

It carries out the reaction L-kynurenine + H2O = anthranilate + L-alanine + H(+). The enzyme catalyses 3-hydroxy-L-kynurenine + H2O = 3-hydroxyanthranilate + L-alanine + H(+). It functions in the pathway amino-acid degradation; L-kynurenine degradation; L-alanine and anthranilate from L-kynurenine: step 1/1. The protein operates within cofactor biosynthesis; NAD(+) biosynthesis; quinolinate from L-kynurenine: step 2/3. Functionally, catalyzes the cleavage of L-kynurenine (L-Kyn) and L-3-hydroxykynurenine (L-3OHKyn) into anthranilic acid (AA) and 3-hydroxyanthranilic acid (3-OHAA), respectively. The protein is Kynureninase of Bacillus cereus (strain ZK / E33L).